Consider the following 130-residue polypeptide: Small ribosomal subunit protein uS9 (130 aa).

Residues 109–130 (RKKERKKYGQRAARARYQYSKR) are disordered.

The protein belongs to the universal ribosomal protein uS9 family.

In Nitratidesulfovibrio vulgaris (strain DSM 19637 / Miyazaki F) (Desulfovibrio vulgaris), this protein is Small ribosomal subunit protein uS9.